A 176-amino-acid polypeptide reads, in one-letter code: Pituitary adenylate cyclase-activating polypeptide (176 aa).

A signal peptide spans 1–24 (MTMCSGARLALLVYGILMHSSVYG). Positions 25–80 (SPAASGLRFPGIRPENEVYDEDGNPQQDFYDSESLGVGSPASALRDAYALYYPAEE) are excised as a propeptide. Residues 98–135 (QPSARRSPADAHGQGLGWDPGGSADDDSEPLSKRHSDG) form a disordered region. The segment at 150–158 (VKKYLAAVL) is important for receptor binding. Leu158 is modified (leucine amide). Residue Lys169 is modified to Lysine amide. Residues 173 to 176 (IPYL) constitute a propeptide that is removed on maturation.

This sequence belongs to the glucagon family. Interacts with ADCYAP1R1 (via N-terminal extracellular domain); both PACAP27 and PACAP38 neuropeptides function as ligand for the ADCYAP1R1 receptor, which modulates the activity of downstream effectors. Interacts with VIPR1 and VIPR2; functions as ligand for VIPR1 and VIPR2 receptors, which modulate the activity of downstream effectors.

Its subcellular location is the secreted. Functionally, PACAP is a neuropeptide involved in diverse array of physiological processes through activating the PACAP subfamily of class B1 G protein-coupled receptors: VIP receptor 1 (VIPR1), VIP receptor 2 (VIPR2), and PACAP type I receptor (ADCYAP1R1). Exerts neuroprotective and general cytoprotective effects due to anti-apoptotic, anti-inflammatory, and antioxidant actions. Promotes neuron projection development through the RAPGEF2/Rap1/B-Raf/ERK pathway. In chromaffin cells, induces long-lasting increase of intracellular calcium concentrations and neuroendocrine secretion. Involved in the control of glucose homeostasis, induces insulin secretion by pancreatic beta cells. PACAP exists in two bioactive forms from proteolysis of the same precursor protein, PACAP27 and PACAP38, which differ by eleven amino acid residues in the C-terminus. The sequence is that of Pituitary adenylate cyclase-activating polypeptide (ADCYAP1) from Bos taurus (Bovine).